The primary structure comprises 343 residues: Methionine import ATP-binding protein MetN 1 (343 aa).

Positions 2–241 (IKLSNITKVF…PKTPLAQKFI (240 aa)) constitute an ABC transporter domain. Residue 38-45 (GASGAGKS) participates in ATP binding.

The protein belongs to the ABC transporter superfamily. Methionine importer (TC 3.A.1.24) family. In terms of assembly, the complex is composed of two ATP-binding proteins (MetN), two transmembrane proteins (MetI) and a solute-binding protein (MetQ).

Its subcellular location is the cell inner membrane. It catalyses the reaction L-methionine(out) + ATP + H2O = L-methionine(in) + ADP + phosphate + H(+). It carries out the reaction D-methionine(out) + ATP + H2O = D-methionine(in) + ADP + phosphate + H(+). Functionally, part of the ABC transporter complex MetNIQ involved in methionine import. Responsible for energy coupling to the transport system. The polypeptide is Methionine import ATP-binding protein MetN 1 (Salmonella choleraesuis (strain SC-B67)).